The chain runs to 424 residues: GTPase Obg (424 aa).

One can recognise an Obg domain in the interval methionine 1–leucine 158. The 171-residue stretch at alanine 159–proline 329 folds into the OBG-type G domain. GTP-binding positions include glycine 165–serine 172, phenylalanine 190–valine 194, aspartate 212–glycine 215, asparagine 282–aspartate 285, and serine 310–alanine 312. Positions 172 and 192 each coordinate Mg(2+). The region spanning threonine 347–glutamate 424 is the OCT domain.

The protein belongs to the TRAFAC class OBG-HflX-like GTPase superfamily. OBG GTPase family. Monomer. Mg(2+) is required as a cofactor.

It is found in the cytoplasm. Its function is as follows. An essential GTPase which binds GTP, GDP and possibly (p)ppGpp with moderate affinity, with high nucleotide exchange rates and a fairly low GTP hydrolysis rate. Plays a role in control of the cell cycle, stress response, ribosome biogenesis and in those bacteria that undergo differentiation, in morphogenesis control. The chain is GTPase Obg from Desulfitobacterium hafniense (strain DSM 10664 / DCB-2).